The primary structure comprises 664 residues: DNA topoisomerase 4 subunit B (664 aa).

ATP contacts are provided by residues Tyr-7, Asn-47, Asp-74, 114–120 (GLHGVGA), and Lys-341. Residues 386-418 (REAARKAREDARSGKKNKRKDTLLSGKLTPAQS) are disordered. The segment covering 387–398 (EAARKAREDARS) has biased composition (basic and acidic residues). In terms of domain architecture, Toprim spans 424 to 538 (NELYLVEGDS…AGRVFIALPP (115 aa)). Mg(2+)-binding residues include Glu-430, Asp-503, and Asp-505.

Belongs to the type II topoisomerase family. ParE type 2 subfamily. As to quaternary structure, heterotetramer composed of ParC and ParE. The cofactor is Mg(2+). It depends on Mn(2+) as a cofactor. Ca(2+) is required as a cofactor.

It catalyses the reaction ATP-dependent breakage, passage and rejoining of double-stranded DNA.. Its function is as follows. Topoisomerase IV is essential for chromosome segregation. It relaxes supercoiled DNA. Performs the decatenation events required during the replication of a circular DNA molecule. This is DNA topoisomerase 4 subunit B from Staphylococcus epidermidis (strain ATCC 35984 / DSM 28319 / BCRC 17069 / CCUG 31568 / BM 3577 / RP62A).